Consider the following 173-residue polypeptide: Disulfide bond formation protein B 2 (173 aa).

Residues 1-9 lie on the Cytoplasmic side of the membrane; that stretch reads MSLAGSRLL. The chain crosses the membrane as a helical span at residues 10–26; that stretch reads FSLVFLVGALASWAAFN. At 27–44 the chain is on the periplasmic side; the sequence is LQTGGGLESCSLWSVQRL. Residues 45 to 61 traverse the membrane as a helical segment; the sequence is LLLALGGVNLLAVIQGP. Residues 62–67 are Cytoplasmic-facing; sequence GRVGRA. A helical membrane pass occupies residues 68–85; the sequence is VYWGLNLLLGLLGVVTAG. At 86-142 the chain is on the periplasmic side; sequence RHVLLQNIPSEQLLACLPDMSFMLRQLSWWQALKLTFMGTSDCAEVTWTLLDMSLPE. C101 and C128 are disulfide-bonded. The helical transmembrane segment at 143 to 161 threads the bilayer; it reads WSLLFFVIMLIFSGYRLWR. The Cytoplasmic portion of the chain corresponds to 162–173; that stretch reads QLRGARKAVALP.

The protein belongs to the DsbB family.

The protein resides in the cell inner membrane. Functionally, required for disulfide bond formation in some periplasmic proteins. Acts by oxidizing the DsbA protein. In Pseudomonas fluorescens (strain ATCC BAA-477 / NRRL B-23932 / Pf-5), this protein is Disulfide bond formation protein B 2.